Reading from the N-terminus, the 868-residue chain is Probable beta-glucosidase F (868 aa).

The first 20 residues, 1–20 (MAHRWLILALVAAAAPRALA), serve as a signal peptide directing secretion. The disordered stretch occupies residues 21 to 40 (SPGPSLNERQSDDEPFSPPY). N-linked (GlcNAc...) asparagine glycosylation is found at N65, N73, and N257. Residue D285 is part of the active site. N-linked (GlcNAc...) asparagine glycosylation is found at N328, N360, N395, N421, and N726. Residues 731-752 (YPYPDGYSTDPQPPPRAGGAEG) form a disordered region.

The protein belongs to the glycosyl hydrolase 3 family.

The protein localises to the secreted. The catalysed reaction is Hydrolysis of terminal, non-reducing beta-D-glucosyl residues with release of beta-D-glucose.. The protein operates within glycan metabolism; cellulose degradation. Beta-glucosidases are one of a number of cellulolytic enzymes involved in the degradation of cellulosic biomass. Catalyzes the last step releasing glucose from the inhibitory cellobiose. This Emericella nidulans (strain FGSC A4 / ATCC 38163 / CBS 112.46 / NRRL 194 / M139) (Aspergillus nidulans) protein is Probable beta-glucosidase F (bglF).